We begin with the raw amino-acid sequence, 319 residues long: tRNA U34 carboxymethyltransferase (319 aa).

Residues K88, W102, K107, G126, 176–177, M192, Y196, and R311 each bind carboxy-S-adenosyl-L-methionine; that span reads LE.

The protein belongs to the class I-like SAM-binding methyltransferase superfamily. CmoB family. Homotetramer.

It catalyses the reaction carboxy-S-adenosyl-L-methionine + 5-hydroxyuridine(34) in tRNA = 5-carboxymethoxyuridine(34) in tRNA + S-adenosyl-L-homocysteine + H(+). Functionally, catalyzes carboxymethyl transfer from carboxy-S-adenosyl-L-methionine (Cx-SAM) to 5-hydroxyuridine (ho5U) to form 5-carboxymethoxyuridine (cmo5U) at position 34 in tRNAs. The protein is tRNA U34 carboxymethyltransferase of Pseudomonas syringae pv. tomato (strain ATCC BAA-871 / DC3000).